Consider the following 157-residue polypeptide: Ribosome-binding factor A (157 aa).

The disordered stretch occupies residues Ser124 to Glu157. Basic and acidic residues predominate over residues Thr147–Glu157.

It belongs to the RbfA family. In terms of assembly, monomer. Binds 30S ribosomal subunits, but not 50S ribosomal subunits or 70S ribosomes.

The protein resides in the cytoplasm. In terms of biological role, one of several proteins that assist in the late maturation steps of the functional core of the 30S ribosomal subunit. Associates with free 30S ribosomal subunits (but not with 30S subunits that are part of 70S ribosomes or polysomes). Required for efficient processing of 16S rRNA. May interact with the 5'-terminal helix region of 16S rRNA. The sequence is that of Ribosome-binding factor A from Streptomyces avermitilis (strain ATCC 31267 / DSM 46492 / JCM 5070 / NBRC 14893 / NCIMB 12804 / NRRL 8165 / MA-4680).